The sequence spans 75 residues: Carwaprin-b (75 aa).

The first 24 residues, 1–24 (MSSGGLLLLLGLLTLWAELTPVSS), serve as a signal peptide directing secretion. Residues 27–72 (RPKKPGLCPPRPQKPPCVRECKNDWRCPGEQKCCRYGCIYECRDPI) enclose the WAP domain. Intrachain disulfides connect Cys34/Cys60, Cys43/Cys64, Cys47/Cys59, and Cys53/Cys68.

It belongs to the venom waprin family. In terms of tissue distribution, expressed by the venom gland.

It is found in the secreted. Damages membranes of susceptible bacteria. Has no hemolytic activity. Not toxic to mice. Does not inhibit the proteinases elastase and cathepsin G. This Tropidechis carinatus (Australian rough-scaled snake) protein is Carwaprin-b.